The chain runs to 972 residues: Macrophage colony-stimulating factor 1 receptor (972 aa).

The first 19 residues, 1–19, serve as a signal peptide directing secretion; it reads MGPGVLLLLLVATAWHGQG. Residues 20–517 lie on the Extracellular side of the membrane; it reads IPVIEPSVPE…HPPDEFLFTP (498 aa). Ig-like C2-type domains lie at 21 to 104, 107 to 197, 203 to 290, 299 to 399, and 402 to 502; these read PVIE…VKDP, PWNV…KVQK, PALT…HSTS, AYLN…LTLR, and PEVS…IPIS. 3 cysteine pairs are disulfide-bonded: Cys42–Cys84, Cys127–Cys177, and Cys224–Cys278. N-linked (GlcNAc...) asparagine glycans are attached at residues Asn45, Asn73, Asn153, Asn240, Asn275, Asn302, Asn335, Asn353, Asn412, Asn428, and Asn480. The cysteines at positions 419 and 485 are disulfide-linked. The helical transmembrane segment at 518-538 threads the bilayer; sequence VVVACMSIMALLLLLLLLLLY. Topologically, residues 539-972 are cytoplasmic; that stretch reads KYKQKPKYQV…LLQPNNYQFC (434 aa). Residues 542–574 are regulatory juxtamembrane domain; sequence QKPKYQVRWKIIESYEGNSYTFIDPTQLPYNEK. Residues Tyr546 and Tyr561 each carry the phosphotyrosine; by autocatalysis modification. Positions 582 to 910 constitute a Protein kinase domain; the sequence is LQFGKTLGAG…PTFQQICSFL (329 aa). ATP contacts are provided by residues 588–596 and Lys616; that span reads LGAGAFGKV. A phosphotyrosine; by autocatalysis mark is found at Tyr699 and Tyr708. Ser713 is subject to Phosphoserine. At Tyr723 the chain carries Phosphotyrosine; by autocatalysis. Catalysis depends on Asp778, which acts as the Proton acceptor. The segment at 796 to 818 is activation loop; the sequence is DFGLARDIMNDSNYIVKGNARLP. Residues Tyr809 and Tyr923 each carry the phosphotyrosine; by autocatalysis modification. The disordered stretch occupies residues 918–950; it reads RRERDYTNLPSSSRSGGSGSSSSELEEESSSEH. A compositionally biased stretch (low complexity) spans 928-940; sequence SSSRSGGSGSSSS. Phosphotyrosine; by autocatalysis is present on Tyr969.

The protein belongs to the protein kinase superfamily. Tyr protein kinase family. CSF-1/PDGF receptor subfamily. In terms of assembly, interacts with INPPL1/SHIP2 and THOC5. Monomer. Homodimer. Interacts with CSF1 and IL34. Interaction with dimeric CSF1 or IL34 leads to receptor homodimerization. Interacts (tyrosine phosphorylated) with PLCG2 (via SH2 domain). Interacts (tyrosine phosphorylated) with PIK3R1 (via SH2 domain). Interacts (tyrosine phosphorylated) with FYN, YES1 and SRC (via SH2 domain). Interacts (tyrosine phosphorylated) with CBL, GRB2 and SLA2. Post-translationally, autophosphorylated in response to CSF1 or IL34 binding. Phosphorylation at Tyr-561 is important for normal down-regulation of signaling by ubiquitination, internalization and degradation. Phosphorylation at Tyr-561 and Tyr-809 is important for interaction with SRC family members, including FYN, YES1 and SRC, and for subsequent activation of these protein kinases. Phosphorylation at Tyr-699 and Tyr-923 is important for interaction with GRB2. Phosphorylation at Tyr-723 is important for interaction with PIK3R1. Phosphorylation at Tyr-708 is important for normal receptor degradation. Phosphorylation at Tyr-723 and Tyr-809 is important for interaction with PLCG2. Phosphorylation at Tyr-969 is important for interaction with CBL. Dephosphorylation by PTPN2 negatively regulates downstream signaling and macrophage differentiation. In terms of processing, ubiquitinated. Becomes rapidly polyubiquitinated after autophosphorylation, leading to its degradation. As to expression, expressed in bone marrow and in differentiated blood mononuclear cells.

The protein localises to the cell membrane. The catalysed reaction is L-tyrosyl-[protein] + ATP = O-phospho-L-tyrosyl-[protein] + ADP + H(+). Present in an inactive conformation in the absence of bound ligand. CSF1 or IL34 binding leads to dimerization and activation by autophosphorylation on tyrosine residues. Inhibited by imatinib/STI-571 (Gleevec), dasatinib, sunitinib/SU11248, lestaurtinib/CEP-701, midostaurin/PKC-412, Ki20227, linifanib/ABT-869, Axitinib/AG013736, sorafenib/BAY 43-9006 and GW2580. Tyrosine-protein kinase that acts as a cell-surface receptor for CSF1 and IL34 and plays an essential role in the regulation of survival, proliferation and differentiation of hematopoietic precursor cells, especially mononuclear phagocytes, such as macrophages and monocytes. Promotes the release of pro-inflammatory chemokines in response to IL34 and CSF1, and thereby plays an important role in innate immunity and in inflammatory processes. Plays an important role in the regulation of osteoclast proliferation and differentiation, the regulation of bone resorption, and is required for normal bone and tooth development. Required for normal male and female fertility, and for normal development of milk ducts and acinar structures in the mammary gland during pregnancy. Promotes reorganization of the actin cytoskeleton, regulates formation of membrane ruffles, cell adhesion and cell migration, and promotes cancer cell invasion. Activates several signaling pathways in response to ligand binding, including the ERK1/2 and the JNK pathway. Phosphorylates PIK3R1, PLCG2, GRB2, SLA2 and CBL. Activation of PLCG2 leads to the production of the cellular signaling molecules diacylglycerol and inositol 1,4,5-trisphosphate, that then lead to the activation of protein kinase C family members, especially PRKCD. Phosphorylation of PIK3R1, the regulatory subunit of phosphatidylinositol 3-kinase, leads to activation of the AKT1 signaling pathway. Activated CSF1R also mediates activation of the MAP kinases MAPK1/ERK2 and/or MAPK3/ERK1, and of the SRC family kinases SRC, FYN and YES1. Activated CSF1R transmits signals both via proteins that directly interact with phosphorylated tyrosine residues in its intracellular domain, or via adapter proteins, such as GRB2. Promotes activation of STAT family members STAT3, STAT5A and/or STAT5B. Promotes tyrosine phosphorylation of SHC1 and INPP5D/SHIP-1. Receptor signaling is down-regulated by protein phosphatases, such as INPP5D/SHIP-1, that dephosphorylate the receptor and its downstream effectors, and by rapid internalization of the activated receptor. In the central nervous system, may play a role in the development of microglia macrophages. The sequence is that of Macrophage colony-stimulating factor 1 receptor (CSF1R) from Homo sapiens (Human).